We begin with the raw amino-acid sequence, 419 residues long: UDP-N-acetylglucosamine 1-carboxyvinyltransferase (419 aa).

Residue 22-23 (KN) participates in phosphoenolpyruvate binding. Arg-91 contacts UDP-N-acetyl-alpha-D-glucosamine. Cys-115 functions as the Proton donor in the catalytic mechanism. Cys-115 carries the post-translational modification 2-(S-cysteinyl)pyruvic acid O-phosphothioketal. Residues 120–124 (RPVDL), 160–163 (KVSV), Asp-305, and Ile-327 contribute to the UDP-N-acetyl-alpha-D-glucosamine site.

This sequence belongs to the EPSP synthase family. MurA subfamily.

The protein localises to the cytoplasm. The catalysed reaction is phosphoenolpyruvate + UDP-N-acetyl-alpha-D-glucosamine = UDP-N-acetyl-3-O-(1-carboxyvinyl)-alpha-D-glucosamine + phosphate. It participates in cell wall biogenesis; peptidoglycan biosynthesis. In terms of biological role, cell wall formation. Adds enolpyruvyl to UDP-N-acetylglucosamine. The chain is UDP-N-acetylglucosamine 1-carboxyvinyltransferase from Serratia proteamaculans (strain 568).